The following is a 252-amino-acid chain: Octanoyltransferase (252 aa).

Residues 1–21 (MPSAPAAPAAPAAPDAAASVA) are compositionally biased toward low complexity. Positions 1–22 (MPSAPAAPAAPAAPDAAASVAP) are disordered. The 182-residue stretch at 56 to 237 (PDTDDEIWVV…RLIAHLDGAT (182 aa)) folds into the BPL/LPL catalytic domain. Substrate-binding positions include 96-103 (RGGQITYH), 168-170 (ALG), and 181-183 (GLS). Cysteine 199 serves as the catalytic Acyl-thioester intermediate.

The protein belongs to the LipB family.

It is found in the cytoplasm. The catalysed reaction is octanoyl-[ACP] + L-lysyl-[protein] = N(6)-octanoyl-L-lysyl-[protein] + holo-[ACP] + H(+). It functions in the pathway protein modification; protein lipoylation via endogenous pathway; protein N(6)-(lipoyl)lysine from octanoyl-[acyl-carrier-protein]: step 1/2. Its function is as follows. Catalyzes the transfer of endogenously produced octanoic acid from octanoyl-acyl-carrier-protein onto the lipoyl domains of lipoate-dependent enzymes. Lipoyl-ACP can also act as a substrate although octanoyl-ACP is likely to be the physiological substrate. The chain is Octanoyltransferase from Burkholderia pseudomallei (strain 668).